A 365-amino-acid polypeptide reads, in one-letter code: tRNA 2-selenouridine synthase (365 aa).

Residues 16–138 (FLLKTPLIDL…LRRYLINVID (123 aa)) form the Rhodanese domain. Cysteine 98 serves as the catalytic S-selanylcysteine intermediate.

Belongs to the SelU family. As to quaternary structure, monomer.

The enzyme catalyses 5-methylaminomethyl-2-thiouridine(34) in tRNA + selenophosphate + (2E)-geranyl diphosphate + H2O + H(+) = 5-methylaminomethyl-2-selenouridine(34) in tRNA + (2E)-thiogeraniol + phosphate + diphosphate. It catalyses the reaction 5-methylaminomethyl-2-thiouridine(34) in tRNA + (2E)-geranyl diphosphate = 5-methylaminomethyl-S-(2E)-geranyl-thiouridine(34) in tRNA + diphosphate. It carries out the reaction 5-methylaminomethyl-S-(2E)-geranyl-thiouridine(34) in tRNA + selenophosphate + H(+) = 5-methylaminomethyl-2-(Se-phospho)selenouridine(34) in tRNA + (2E)-thiogeraniol. The catalysed reaction is 5-methylaminomethyl-2-(Se-phospho)selenouridine(34) in tRNA + H2O = 5-methylaminomethyl-2-selenouridine(34) in tRNA + phosphate. Functionally, involved in the post-transcriptional modification of the uridine at the wobble position (U34) of tRNA(Lys), tRNA(Glu) and tRNA(Gln). Catalyzes the conversion of 2-thiouridine (S2U-RNA) to 2-selenouridine (Se2U-RNA). Acts in a two-step process involving geranylation of 2-thiouridine (S2U) to S-geranyl-2-thiouridine (geS2U) and subsequent selenation of the latter derivative to 2-selenouridine (Se2U) in the tRNA chain. The chain is tRNA 2-selenouridine synthase from Psychromonas ingrahamii (strain DSM 17664 / CCUG 51855 / 37).